Consider the following 357-residue polypeptide: tRNA pseudouridine synthase B (357 aa).

The active-site Nucleophile is Asp-42.

The protein belongs to the pseudouridine synthase TruB family. Type 1 subfamily.

It carries out the reaction uridine(55) in tRNA = pseudouridine(55) in tRNA. Its function is as follows. Responsible for synthesis of pseudouridine from uracil-55 in the psi GC loop of transfer RNAs. The chain is tRNA pseudouridine synthase B from Treponema denticola (strain ATCC 35405 / DSM 14222 / CIP 103919 / JCM 8153 / KCTC 15104).